Here is a 118-residue protein sequence, read N- to C-terminus: MTDNIMKDHRHIFLPQPVKADEKPGAFSERFGWKLLLDTPRKKNVYEGTKFMSQDFWPTPLVKTTAPKVKLIPADAPPQSAKFWKAPLLKDTPRQSNVIPGDFLPFSNTFGLATIQRR.

Functionally, seems to be required for the LH-II stabilization. The polypeptide is Light-harvesting protein B-800/850 gamma chain (pucE) (Rhodobacter capsulatus (Rhodopseudomonas capsulata)).